Here is a 198-residue protein sequence, read N- to C-terminus: ATP-dependent Clp protease proteolytic subunit (198 aa).

Residue Ser-98 is the Nucleophile of the active site. His-123 is an active-site residue.

It belongs to the peptidase S14 family. Fourteen ClpP subunits assemble into 2 heptameric rings which stack back to back to give a disk-like structure with a central cavity, resembling the structure of eukaryotic proteasomes.

The protein resides in the cytoplasm. The enzyme catalyses Hydrolysis of proteins to small peptides in the presence of ATP and magnesium. alpha-casein is the usual test substrate. In the absence of ATP, only oligopeptides shorter than five residues are hydrolyzed (such as succinyl-Leu-Tyr-|-NHMec, and Leu-Tyr-Leu-|-Tyr-Trp, in which cleavage of the -Tyr-|-Leu- and -Tyr-|-Trp bonds also occurs).. Cleaves peptides in various proteins in a process that requires ATP hydrolysis. Has a chymotrypsin-like activity. Plays a major role in the degradation of misfolded proteins. The chain is ATP-dependent Clp protease proteolytic subunit from Ehrlichia ruminantium (strain Welgevonden).